A 559-amino-acid polypeptide reads, in one-letter code: CTP synthase (559 aa).

The segment at 1–270 is amidoligase domain; it reads MTKFVFVTGG…DGLICDKLRL (270 aa). CTP is bound at residue Ser-13. UTP is bound at residue Ser-13. ATP is bound by residues 14 to 19 and Asp-71; that span reads SLGKGI. Mg(2+) contacts are provided by Asp-71 and Glu-144. CTP contacts are provided by residues 151-153, 191-196, and Lys-227; these read DIE and KTKPTQ. UTP is bound by residues 191-196 and Lys-227; that span reads KTKPTQ. One can recognise a Glutamine amidotransferase type-1 domain in the interval 295-548; it reads TIAMVGKYVD…IKAAIDHQKS (254 aa). Gly-357 serves as a coordination point for L-glutamine. The Nucleophile; for glutamine hydrolysis role is filled by Cys-384. L-glutamine contacts are provided by residues 385 to 388, Glu-408, and Arg-474; that span reads LGMQ. Residues His-521 and Glu-523 contribute to the active site.

Belongs to the CTP synthase family. As to quaternary structure, homotetramer.

It catalyses the reaction UTP + L-glutamine + ATP + H2O = CTP + L-glutamate + ADP + phosphate + 2 H(+). The enzyme catalyses L-glutamine + H2O = L-glutamate + NH4(+). It carries out the reaction UTP + NH4(+) + ATP = CTP + ADP + phosphate + 2 H(+). It participates in pyrimidine metabolism; CTP biosynthesis via de novo pathway; CTP from UDP: step 2/2. With respect to regulation, allosterically activated by GTP, when glutamine is the substrate; GTP has no effect on the reaction when ammonia is the substrate. The allosteric effector GTP functions by stabilizing the protein conformation that binds the tetrahedral intermediate(s) formed during glutamine hydrolysis. Inhibited by the product CTP, via allosteric rather than competitive inhibition. Functionally, catalyzes the ATP-dependent amination of UTP to CTP with either L-glutamine or ammonia as the source of nitrogen. Regulates intracellular CTP levels through interactions with the four ribonucleotide triphosphates. This is CTP synthase from Paracidovorax citrulli (strain AAC00-1) (Acidovorax citrulli).